We begin with the raw amino-acid sequence, 120 residues long: UPF0231 protein YacL (120 aa).

This sequence belongs to the UPF0231 family.

In Salmonella heidelberg (strain SL476), this protein is UPF0231 protein YacL.